We begin with the raw amino-acid sequence, 240 residues long: 1-(5-phosphoribosyl)-5-[(5-phosphoribosylamino)methylideneamino] imidazole-4-carboxamide isomerase (240 aa).

D8 functions as the Proton acceptor in the catalytic mechanism. D129 functions as the Proton donor in the catalytic mechanism.

Belongs to the HisA/HisF family.

Its subcellular location is the cytoplasm. It catalyses the reaction 1-(5-phospho-beta-D-ribosyl)-5-[(5-phospho-beta-D-ribosylamino)methylideneamino]imidazole-4-carboxamide = 5-[(5-phospho-1-deoxy-D-ribulos-1-ylimino)methylamino]-1-(5-phospho-beta-D-ribosyl)imidazole-4-carboxamide. The protein operates within amino-acid biosynthesis; L-histidine biosynthesis; L-histidine from 5-phospho-alpha-D-ribose 1-diphosphate: step 4/9. This chain is 1-(5-phosphoribosyl)-5-[(5-phosphoribosylamino)methylideneamino] imidazole-4-carboxamide isomerase, found in Caldanaerobacter subterraneus subsp. tengcongensis (strain DSM 15242 / JCM 11007 / NBRC 100824 / MB4) (Thermoanaerobacter tengcongensis).